A 391-amino-acid polypeptide reads, in one-letter code: Phosphoglycerate kinase (391 aa).

Residues 21-23 (DLN), Arg36, 59-62 (HLGR), Arg113, and Arg146 each bind substrate. Residues Lys197, Glu319, and 345 to 348 (GGDT) each bind ATP.

The protein belongs to the phosphoglycerate kinase family. As to quaternary structure, monomer.

It is found in the cytoplasm. The enzyme catalyses (2R)-3-phosphoglycerate + ATP = (2R)-3-phospho-glyceroyl phosphate + ADP. It participates in carbohydrate degradation; glycolysis; pyruvate from D-glyceraldehyde 3-phosphate: step 2/5. This chain is Phosphoglycerate kinase, found in Colwellia psychrerythraea (strain 34H / ATCC BAA-681) (Vibrio psychroerythus).